Reading from the N-terminus, the 158-residue chain is Transcription elongation factor GreA (158 aa).

The stretch at 53–73 (EQQSFIEGRIQEIEGKLSNAQ) forms a coiled coil.

This sequence belongs to the GreA/GreB family.

In terms of biological role, necessary for efficient RNA polymerase transcription elongation past template-encoded arresting sites. The arresting sites in DNA have the property of trapping a certain fraction of elongating RNA polymerases that pass through, resulting in locked ternary complexes. Cleavage of the nascent transcript by cleavage factors such as GreA or GreB allows the resumption of elongation from the new 3'terminus. GreA releases sequences of 2 to 3 nucleotides. This Halorhodospira halophila (strain DSM 244 / SL1) (Ectothiorhodospira halophila (strain DSM 244 / SL1)) protein is Transcription elongation factor GreA.